A 1211-amino-acid chain; its full sequence is Sterol 3-beta-glucosyltransferase (1211 aa).

Residues 1–10 (MSQLRPRDSS) are compositionally biased toward basic and acidic residues. Positions 1 to 61 (MSQLRPRDSS…DETEAEDDID (61 aa)) are disordered. Positions 196–235 (EKLKTTFDLSDDDEFVNDYPCWLLHEVFLQGHIYITSRYL) constitute a GRAM 1 domain. One can recognise a PH domain in the interval 248–347 (VTMSGALSIR…WVTDLRKHIF (100 aa)). Disordered stretches follow at residues 422-452 (LTDS…KLSR) and 500-531 (VVPN…PSNW). The segment covering 423-432 (TDSDSSESDS) has biased composition (acidic residues). Residues 507–525 (SELKQDHAGDAPKDSEEPS) are compositionally biased toward basic and acidic residues. A GRAM 2 domain is found at 586–652 (SRFRKHFSLP…SDIENVYNLK (67 aa)). UDP-alpha-D-glucose is bound by residues Ser770, Arg771, Asp773, Asn1046, Asn1072, Val1073, His1075, His1088, Ser1091, Gly1092, Thr1093, Asp1112, and Gln1113.

The protein belongs to the glycosyltransferase 28 family.

It localises to the cytoplasm. Its subcellular location is the preautophagosomal structure membrane. The enzyme catalyses a sterol + UDP-alpha-D-glucose = a sterol 3-beta-D-glucoside + UDP + H(+). It catalyses the reaction ergosterol + UDP-alpha-D-glucose = ergosteryl 3-beta-D-glucoside + UDP + H(+). In terms of biological role, sterol glycosyltransferase responsible for the glycosylation of ergosterol to form ergosterol-glucoside. Shows also activity in vitro on other sterols such as cholesterol, beta-sitosterol, stigmasterol and tomatidine. Probable sterol 3-beta-glucosyltransferase that mediates autophagic degradation of peroxisomes (pexophagy). The polypeptide is Sterol 3-beta-glucosyltransferase (Komagataella phaffii (strain GS115 / ATCC 20864) (Yeast)).